The chain runs to 581 residues: Zinc finger protein 319 (581 aa).

Low complexity predominate over residues 1 to 22 (MSESWQQPPQTQPQQPQAPQPQ). A disordered region spans residues 1-39 (MSESWQQPPQTQPQQPQAPQPQHHAETPPALAEHTLPPG). A C2H2-type 1 zinc finger spans residues 75 to 99 (PKCGVCGHDLAHLSSPHEHQCLAGH). The C2H2-type 2; degenerate zinc-finger motif lies at 103–125 (FQCTQCLKIFHQATDLLEHQCVQ). A Glycyl lysine isopeptide (Lys-Gly) (interchain with G-Cter in SUMO2) cross-link involves residue K129. C2H2-type zinc fingers lie at residues 131 to 153 (FVCG…HSSH), 201 to 223 (YSCP…ERIH), 229 to 251 (YKCT…KRTH), and 257 to 279 (YKCA…MYAH). At S280 the chain carries Phosphoserine. The C2H2-type 7; degenerate zinc finger occupies 286–308 (FRCNVCELHFKESSELLQHPCTP). 3 consecutive C2H2-type zinc fingers follow at residues 314 to 336 (FRCG…ERTH), 342 to 364 (FKCD…RRTH), and 370 to 392 (FKCG…QHVH). A C2H2-type 11; degenerate zinc finger spans residues 398–420 (FKCPVCQKGFDQSAELLRHKCLP). Residues 427–449 (FKCPVCNKAYKRASALQKHQLSH) form a C2H2-type 12 zinc finger. Residues 457 to 479 (LRCTLCERRFFSSSEFVQHRCDP) form a C2H2-type 13; degenerate zinc finger. C2H2-type zinc fingers lie at residues 485–507 (LKCP…RRVH), 513–535 (YKCP…QGVH), and 541–563 (FKCV…SAQH).

It belongs to the krueppel C2H2-type zinc-finger protein family.

The protein resides in the nucleus. In terms of biological role, may be involved in transcriptional regulation. This chain is Zinc finger protein 319 (Znf319), found in Mus musculus (Mouse).